Here is a 440-residue protein sequence, read N- to C-terminus: Serine hydroxymethyltransferase (440 aa).

(6S)-5,6,7,8-tetrahydrofolate is bound by residues Leu-119 and 123–125 (GHL). Position 228 is an N6-(pyridoxal phosphate)lysine (Lys-228). 370–372 (SPF) contacts (6S)-5,6,7,8-tetrahydrofolate.

Belongs to the SHMT family. In terms of assembly, homodimer. Requires pyridoxal 5'-phosphate as cofactor.

Its subcellular location is the cytoplasm. It carries out the reaction (6R)-5,10-methylene-5,6,7,8-tetrahydrofolate + glycine + H2O = (6S)-5,6,7,8-tetrahydrofolate + L-serine. It functions in the pathway one-carbon metabolism; tetrahydrofolate interconversion. It participates in amino-acid biosynthesis; glycine biosynthesis; glycine from L-serine: step 1/1. Functionally, catalyzes the reversible interconversion of serine and glycine with tetrahydrofolate (THF) serving as the one-carbon carrier. This reaction serves as the major source of one-carbon groups required for the biosynthesis of purines, thymidylate, methionine, and other important biomolecules. Also exhibits THF-independent aldolase activity toward beta-hydroxyamino acids, producing glycine and aldehydes, via a retro-aldol mechanism. This chain is Serine hydroxymethyltransferase, found in Chlorobaculum tepidum (strain ATCC 49652 / DSM 12025 / NBRC 103806 / TLS) (Chlorobium tepidum).